The primary structure comprises 279 residues: Eukaryotic translation initiation factor 3 subunit G (279 aa).

Disordered regions lie at residues Ala-69 to Glu-90 and Leu-149 to Asp-193. Ser-77 carries the post-translational modification Phosphoserine. Residues Thr-196 to Lys-275 form the RRM domain.

The protein belongs to the eIF-3 subunit G family. In terms of assembly, component of the eukaryotic translation initiation factor 3 (eIF-3) complex.

Its subcellular location is the cytoplasm. Its function is as follows. RNA-binding component of the eukaryotic translation initiation factor 3 (eIF-3) complex, which is involved in protein synthesis of a specialized repertoire of mRNAs and, together with other initiation factors, stimulates binding of mRNA and methionyl-tRNAi to the 40S ribosome. The eIF-3 complex specifically targets and initiates translation of a subset of mRNAs involved in cell proliferation. This subunit can bind 18S rRNA. The chain is Eukaryotic translation initiation factor 3 subunit G from Lodderomyces elongisporus (strain ATCC 11503 / CBS 2605 / JCM 1781 / NBRC 1676 / NRRL YB-4239) (Yeast).